Here is a 367-residue protein sequence, read N- to C-terminus: Endopolygalacturonase B (367 aa).

Residues 1–17 (MHFQLLGLAALGSLAAA) form the signal peptide. The propeptide occupies 18-30 (APAPSRTSELVER). An intrachain disulfide couples Cys34 to Cys49. PbH1 repeat units follow at residues 161-191 (GNDV…DVSE), 192-213 (SNGV…AINS), 214-234 (GENI…SIGS), 243-264 (VKNV…RIKT), and 272-294 (VSGV…VIEQ). The active-site Proton donor is Asp206. Cys208 and Cys224 are disulfide-bonded. His228 is an active-site residue. Residue Asn279 is glycosylated (N-linked (GlcNAc...) asparagine). Intrachain disulfides connect Cys334–Cys339 and Cys358–Cys367.

Belongs to the glycosyl hydrolase 28 family.

It is found in the secreted. The enzyme catalyses (1,4-alpha-D-galacturonosyl)n+m + H2O = (1,4-alpha-D-galacturonosyl)n + (1,4-alpha-D-galacturonosyl)m.. Functionally, involved in maceration and soft-rotting of plant tissue. Hydrolyzes the 1,4-alpha glycosidic bonds of de-esterified pectate in the smooth region of the plant cell wall. The sequence is that of Endopolygalacturonase B (pgaB) from Aspergillus flavus (strain ATCC MYA-384 / AF70).